Consider the following 179-residue polypeptide: Inner membrane-spanning protein YciB (179 aa).

5 helical membrane-spanning segments follow: residues 22 to 42 (IYAA…YSWV), 50 to 70 (MALI…FFHN), 76 to 96 (WKVT…QWVM), 121 to 141 (LAWA…AFWL), and 149 to 169 (FKVF…GVYI).

The protein belongs to the YciB family.

It localises to the cell inner membrane. Plays a role in cell envelope biogenesis, maintenance of cell envelope integrity and membrane homeostasis. This Escherichia fergusonii (strain ATCC 35469 / DSM 13698 / CCUG 18766 / IAM 14443 / JCM 21226 / LMG 7866 / NBRC 102419 / NCTC 12128 / CDC 0568-73) protein is Inner membrane-spanning protein YciB.